Here is a 109-residue protein sequence, read N- to C-terminus: ATP-dependent Clp protease adapter protein ClpS (109 aa).

Residues 1 to 21 (MAERKQGGQNNGAGSSVITEV) form a disordered region.

This sequence belongs to the ClpS family. As to quaternary structure, binds to the N-terminal domain of the chaperone ClpA.

Its function is as follows. Involved in the modulation of the specificity of the ClpAP-mediated ATP-dependent protein degradation. The polypeptide is ATP-dependent Clp protease adapter protein ClpS (Caulobacter sp. (strain K31)).